The sequence spans 108 residues: ATP-dependent Clp protease adapter protein ClpS (108 aa).

Positions M1–E10 are enriched in basic and acidic residues. Residues M1 to K21 are disordered.

The protein belongs to the ClpS family. As to quaternary structure, binds to the N-terminal domain of the chaperone ClpA.

Functionally, involved in the modulation of the specificity of the ClpAP-mediated ATP-dependent protein degradation. The sequence is that of ATP-dependent Clp protease adapter protein ClpS from Rhodospirillum centenum (strain ATCC 51521 / SW).